The primary structure comprises 227 residues: Floral homeotic protein DEFICIENS (227 aa).

An MADS-box domain is found at 3–57; the sequence is RGKIQIKRIENQTNRQVTYSKRRNGLFKKAHELSVLCDAKVSIIMISSTQKLHEY. Positions 84-174 constitute a K-box domain; sequence YEKMQEHLKK…VLEFDARRED (91 aa).

It is found in the nucleus. Its function is as follows. Transcription factor involved in the genetic control of flower development. Acts in conjunction with GLOBOSA (glo). This is Floral homeotic protein DEFICIENS (DEFA) from Antirrhinum majus (Garden snapdragon).